We begin with the raw amino-acid sequence, 145 residues long: Large ribosomal subunit protein uL15 (145 aa).

The disordered stretch occupies residues 1-58 (MFNLLKPKGASKRRKIVGRGPGSGLGKTSGRGQKGQKARNTSPRLGFEGGQTPLYRRL). Gly residues predominate over residues 19-33 (RGPGSGLGKTSGRGQ).

It belongs to the universal ribosomal protein uL15 family. Part of the 50S ribosomal subunit.

Its function is as follows. Binds to the 23S rRNA. In Borrelia garinii subsp. bavariensis (strain ATCC BAA-2496 / DSM 23469 / PBi) (Borreliella bavariensis), this protein is Large ribosomal subunit protein uL15.